The following is a 504-amino-acid chain: Maturase K (504 aa).

This sequence belongs to the intron maturase 2 family. MatK subfamily.

It is found in the plastid. Its subcellular location is the chloroplast. Usually encoded in the trnK tRNA gene intron. Probably assists in splicing its own and other chloroplast group II introns. The sequence is that of Maturase K from Carpinus betulus (European hornbeam).